A 201-amino-acid polypeptide reads, in one-letter code: Dephospho-CoA kinase (201 aa).

In terms of domain architecture, DPCK spans 4–201 (IIGITGGIAS…LEGGRQDDRD (198 aa)). ATP is bound at residue 12-17 (ASGKST).

Belongs to the CoaE family.

The protein localises to the cytoplasm. It catalyses the reaction 3'-dephospho-CoA + ATP = ADP + CoA + H(+). Its pathway is cofactor biosynthesis; coenzyme A biosynthesis; CoA from (R)-pantothenate: step 5/5. Its function is as follows. Catalyzes the phosphorylation of the 3'-hydroxyl group of dephosphocoenzyme A to form coenzyme A. The protein is Dephospho-CoA kinase of Streptococcus pneumoniae serotype 4 (strain ATCC BAA-334 / TIGR4).